The sequence spans 356 residues: Homoserine O-acetyltransferase (356 aa).

The 286-residue stretch at 50 to 335 (NVILVCHALT…DEPYGHDAFL (286 aa)) folds into the AB hydrolase-1 domain. The active-site Nucleophile is S146. R215 provides a ligand contact to substrate. Catalysis depends on residues D302 and H331. Residue D332 participates in substrate binding.

The protein belongs to the AB hydrolase superfamily. MetX family. As to quaternary structure, homodimer.

Its subcellular location is the cytoplasm. The catalysed reaction is L-homoserine + acetyl-CoA = O-acetyl-L-homoserine + CoA. It functions in the pathway amino-acid biosynthesis; L-methionine biosynthesis via de novo pathway; O-acetyl-L-homoserine from L-homoserine: step 1/1. Transfers an acetyl group from acetyl-CoA to L-homoserine, forming acetyl-L-homoserine. The polypeptide is Homoserine O-acetyltransferase (Chlorobaculum tepidum (strain ATCC 49652 / DSM 12025 / NBRC 103806 / TLS) (Chlorobium tepidum)).